The chain runs to 874 residues: Alanine--tRNA ligase (874 aa).

His563, His567, Cys665, and His669 together coordinate Zn(2+).

The protein belongs to the class-II aminoacyl-tRNA synthetase family. Requires Zn(2+) as cofactor.

The protein resides in the cytoplasm. The enzyme catalyses tRNA(Ala) + L-alanine + ATP = L-alanyl-tRNA(Ala) + AMP + diphosphate. In terms of biological role, catalyzes the attachment of alanine to tRNA(Ala) in a two-step reaction: alanine is first activated by ATP to form Ala-AMP and then transferred to the acceptor end of tRNA(Ala). Also edits incorrectly charged Ser-tRNA(Ala) and Gly-tRNA(Ala) via its editing domain. The chain is Alanine--tRNA ligase from Actinobacillus pleuropneumoniae serotype 3 (strain JL03).